The chain runs to 200 residues: Ribonuclease HII (200 aa).

An RNase H type-2 domain is found at 14–200 (SRLAGVDEVG…FAPVKQWQLL (187 aa)). Positions 20, 21, and 112 each coordinate a divalent metal cation.

Belongs to the RNase HII family. The cofactor is Mn(2+). Mg(2+) is required as a cofactor.

The protein localises to the cytoplasm. The catalysed reaction is Endonucleolytic cleavage to 5'-phosphomonoester.. Endonuclease that specifically degrades the RNA of RNA-DNA hybrids. The sequence is that of Ribonuclease HII from Chromohalobacter salexigens (strain ATCC BAA-138 / DSM 3043 / CIP 106854 / NCIMB 13768 / 1H11).